The chain runs to 861 residues: Interleukin-12 receptor subunit beta-2 (861 aa).

The first 23 residues, methionine 1 to alanine 23, serve as a signal peptide directing secretion. The Extracellular portion of the chain corresponds to lysine 24–asparagine 622. N-linked (GlcNAc...) asparagine glycans are attached at residues asparagine 48, asparagine 129, asparagine 166, and asparagine 271. 5 consecutive Fibronectin type-III domains span residues glutamine 126–proline 224, proline 226–proline 317, glutamate 318–aspartate 415, alanine 423–alanine 520, and proline 521–lysine 620. A WSXWS motif motif is present at residues tryptophan 305–serine 309. Residues asparagine 347, asparagine 376, and asparagine 480 are each glycosylated (N-linked (GlcNAc...) asparagine). A helical transmembrane segment spans residues tryptophan 623–methionine 643. The Cytoplasmic portion of the chain corresponds to arginine 644–leucine 861. A Box 1 motif motif is present at residues cysteine 662–alanine 670. The interval phenylalanine 718 to glycine 761 is disordered. Tyrosine 800 carries the phosphotyrosine modification.

This sequence belongs to the type I cytokine receptor family. Type 2 subfamily. Heterodimer/heterooligomer; disulfide-linked. The functional high affinity IL12 receptor is composed of I12RB1 and IL12RB2. Il12RB2 binds JAK2 (via its N-terminal) through a membrane-proximal region of the cytoplasmic domain. In terms of processing, on IL12 stimulation, phosphorylated on C-terminal tyrosine residues.

It is found in the membrane. Receptor for interleukin-12. This subunit is the signaling component coupling to the JAK2/STAT4 pathway. This chain is Interleukin-12 receptor subunit beta-2 (IL12RB2), found in Sus scrofa (Pig).